A 355-amino-acid chain; its full sequence is Glycerol-3-phosphate dehydrogenase [NAD(P)+] (355 aa).

Residues Ser-14, Trp-15, Arg-35, and Lys-117 each coordinate NADPH. Lys-117, Gly-147, and Ser-149 together coordinate sn-glycerol 3-phosphate. Position 151 (Ala-151) interacts with NADPH. Positions 202, 255, 265, 266, and 267 each coordinate sn-glycerol 3-phosphate. Catalysis depends on Lys-202, which acts as the Proton acceptor. Arg-266 provides a ligand contact to NADPH. NADPH is bound by residues Ile-290 and Glu-292.

The protein belongs to the NAD-dependent glycerol-3-phosphate dehydrogenase family.

Its subcellular location is the cytoplasm. The catalysed reaction is sn-glycerol 3-phosphate + NAD(+) = dihydroxyacetone phosphate + NADH + H(+). The enzyme catalyses sn-glycerol 3-phosphate + NADP(+) = dihydroxyacetone phosphate + NADPH + H(+). It participates in membrane lipid metabolism; glycerophospholipid metabolism. Functionally, catalyzes the reduction of the glycolytic intermediate dihydroxyacetone phosphate (DHAP) to sn-glycerol 3-phosphate (G3P), the key precursor for phospholipid synthesis. This is Glycerol-3-phosphate dehydrogenase [NAD(P)+] from Lawsonia intracellularis (strain PHE/MN1-00).